The following is a 437-amino-acid chain: Mitochondrial distribution and morphology protein 12 (437 aa).

The region spanning Met1 to Ile437 is the SMP-LTD domain. Residues Asp73–Leu85 are compositionally biased toward acidic residues. 3 disordered regions span residues Asp73 to Asn101, Ser187 to Met274, and Ser354 to Gly384. Basic and acidic residues predominate over residues Ser91–Asn101. 2 stretches are compositionally biased toward polar residues: residues Asp215–Asn240 and Ala371–Arg381.

The protein belongs to the MDM12 family. As to quaternary structure, component of the ER-mitochondria encounter structure (ERMES) or MDM complex, composed of mmm1, mdm10, mdm12 and mdm34. A mmm1 homodimer associates with one molecule of mdm12 on each side in a pairwise head-to-tail manner, and the SMP-LTD domains of mmm1 and mdm12 generate a continuous hydrophobic tunnel for phospholipid trafficking.

The protein resides in the mitochondrion outer membrane. The protein localises to the endoplasmic reticulum membrane. In terms of biological role, component of the ERMES/MDM complex, which serves as a molecular tether to connect the endoplasmic reticulum (ER) and mitochondria. Components of this complex are involved in the control of mitochondrial shape and protein biogenesis, and function in nonvesicular lipid trafficking between the ER and mitochondria. Mdm12 is required for the interaction of the ER-resident membrane protein mmm1 and the outer mitochondrial membrane-resident beta-barrel protein mdm10. The mdm12-mmm1 subcomplex functions in the major beta-barrel assembly pathway that is responsible for biogenesis of all mitochondrial outer membrane beta-barrel proteins, and acts in a late step after the SAM complex. The mdm10-mdm12-mmm1 subcomplex further acts in the TOM40-specific pathway after the action of the mdm12-mmm1 complex. Essential for establishing and maintaining the structure of mitochondria and maintenance of mtDNA nucleoids. This is Mitochondrial distribution and morphology protein 12 from Aspergillus clavatus (strain ATCC 1007 / CBS 513.65 / DSM 816 / NCTC 3887 / NRRL 1 / QM 1276 / 107).